Consider the following 395-residue polypeptide: MPMNIVNMFGKYIKIIKWIGIASLIGIVGGLSSVIIAIIIEYFPEKHNVLLIPIVFFIAGLFVDYIYELKGSGIDRVLKALNTNEKLTWIRGLLKVLLAGAVIAVGGSAGKEGPCVQSSASFADELYRLLKLKNRELVIITGIAGGLGGAFSAPLGTAILACEIIEHENFNYINLIPPIIASVVGYLIFYLITGRKHLFNITLSYTINIHDFLLFILGAFFCSLIAHCYIKTYRKISSTFDNLKIPYCIKTLIGGILVAVISYFIPEVMGMGLTLTKELFIMEFSLVFLVLLLIGKILATSFTVGSGTPGGLVFPSMCIGAISGIIFGSLIGDCSAPYIVLGIATTLSATTNAPLGGAVLCTEIFGFDFAVPASIGAVIGYQMTKLETIFKYIRF.

The next 10 membrane-spanning stretches (helical) occupy residues 19-39 (IGIA…IAII), 49-69 (VLLI…IYEL), 87-107 (LTWI…AVGG), 137-157 (LVII…PLGT), 172-192 (YINL…FYLI), 206-226 (TINI…SLIA), 252-272 (LIGG…MGMG), 279-299 (LFIM…KILA), 311-331 (GLVF…GSLI), and 359-379 (VLCT…GAVI).

Belongs to the chloride channel (TC 2.A.49) family.

The protein resides in the cell membrane. This is an uncharacterized protein from Methanocaldococcus jannaschii (strain ATCC 43067 / DSM 2661 / JAL-1 / JCM 10045 / NBRC 100440) (Methanococcus jannaschii).